Here is a 2475-residue protein sequence, read N- to C-terminus: Polyprotein pp220 (2475 aa).

A lipid anchor (N-myristoyl glycine; by host) is attached at Gly2. Residues 2184–2211 (RNQIIGELNAFRTQLEDTRREVNNLIQT) adopt a coiled-coil conformation.

The protein belongs to the asfivirus polyprotein pp220 family. In terms of processing, the polyprotein is not glycosylated. Specific enzymatic cleavages in vivo by the viral pS273R protease yield mature proteins.

It is found in the host cytoplasm. The protein localises to the host perinuclear region. It localises to the virion. Its subcellular location is the host nucleus. In terms of biological role, essential for the core assembly. Its myristoyl moiety may function as a membrane-anchoring signal to bind the developing core shell to the inner viral envelope. The structural protein p34 is a component of the virus core shell. Its function is as follows. The structural protein p14 is a component of the virus core shell. Functionally, the structural protein p37 is a component of the virus core shell. In terms of biological role, the structural protein p150 is a component of the virus core shell. The chain is Polyprotein pp220 from African swine fever virus (isolate Warthog/Namibia/Wart80/1980) (ASFV).